We begin with the raw amino-acid sequence, 207 residues long: Small ribosomal subunit protein uS4A (207 aa).

In terms of domain architecture, S4 RNA-binding spans 98-163 (TRLDNLVYRL…SPKFKELKEN (66 aa)).

Belongs to the universal ribosomal protein uS4 family. As to quaternary structure, part of the 30S ribosomal subunit. Contacts protein S5. The interaction surface between S4 and S5 is involved in control of translational fidelity.

In terms of biological role, one of the primary rRNA binding proteins, it binds directly to 16S rRNA where it nucleates assembly of the body of the 30S subunit. Functionally, with S5 and S12 plays an important role in translational accuracy. The polypeptide is Small ribosomal subunit protein uS4A (Alkaliphilus metalliredigens (strain QYMF)).